The following is a 489-amino-acid chain: MGQIVTFFQEVPHILEEVMNIVLMTLSILAILKGIYNVMTCGIIGLITFLFLCGRSCSSIYKDNYEFFSLDLDMSSLNATMPLSCSKNNSHHYIQVGNETGLELTLTNTSIINHKFCNLSDAHRRNLYDKALMSILTTFHLSIPDFNQYEAMSCDFNGGKISVQYNLSHSNYVDAGNHCGTIANGIMDVFRRMYWSTSLSVASDISGTQCIQTDYKYLIIQNTSWEDHCMFSRPSPMGFLSLLSQRTRNFYISRRLLGLFTWTLSDSEGNDMPGGYCLTRSMLIGLDLKCFGNTAIAKCNQAHDEEFCDMLRLFDFNKQAISKLRSEVQQSINLINKAVNALINDQLVMRNHLRDLMGIPYCNYSKFWYLNDTRTGRTSLPKCWLVTNGSYLNETQFSTEIEQEANNMFTDMLRKEYEKRQSTTPLGLVDLFVFSTSFYLISVFLHLIKIPTHRHIKGKPCPKPHRLNHMAICSCGFYKQPGLPTQWKR.

The N-myristoyl glycine; by host moiety is linked to residue G2. At G2–E17 the chain is on the extracellular side. The helical transmembrane segment at V18–K33 threads the bilayer. The Cytoplasmic segment spans residues G34–S58. Residue C57 coordinates Zn(2+). The Extracellular portion of the chain corresponds to S59–D430. N-linked (GlcNAc...) asparagine; by host glycosylation is found at N78, N88, N98, N108, N118, and N166. 6 cysteine pairs are disulfide-bonded: C85/C229, C117/C154, C179/C210, C277/C290, C299/C308, and C362/C383. Residue N222 is glycosylated (N-linked (GlcNAc...) asparagine; by host). N-linked (GlcNAc...) asparagine; by host glycosylation is found at N363, N371, N388, and N393. A helical membrane pass occupies residues L431–P451. Topologically, residues T452–R489 are cytoplasmic. Zn(2+) is bound by residues H453, H455, C461, H465, C473, and C475.

This sequence belongs to the arenaviridae GPC protein family. Interacts with glycoprotein G2. Part of the GP complex (GP-C) together with glycoprotein G1 and glycoprotein G2. The GP-complex interacts with protein Z, which interacts with ribonucleocapsid; these interactions may induce virion budding. As to quaternary structure, homotrimer; disulfide-linked. In pre-fusion state, G1 homotrimers bind G2 homotrimers via ionic interactions. Part of the GP complex (GP-C) together with glycoprotein G2 and the stable signal peptide. The GP-complex interacts with protein Z, which interacts with ribonucleocapsid; these interactions may induce virion budding. In terms of assembly, homotrimer. Interacts with the stable signal peptide. In pre-fusion state, G2 homotrimers bind G1 homotrimers via ionic interactions. Part of the GP complex (GP-C) together with glycoprotein G1 and the stable signal peptide. Acidification in the endosome triggers rearrangements, which ultimately leads to a 6 helix bundle formed by the two heptad repeat domains (HR1 and HR2) in post-fusion state. The GP-complex interacts with protein Z, which interacts with ribonucleocapsid; these interactions may induce virion budding. Post-translationally, specific enzymatic cleavages in vivo yield mature proteins. GP-C polyprotein is cleaved in the endoplasmic reticulum by the host protease MBTPS1. Only cleaved glycoprotein is incorporated into virions. In terms of processing, the SSP remains stably associated with the GP complex following cleavage by signal peptidase and plays crucial roles in the trafficking of GP through the secretory pathway. Myristoylation is necessary for GP2-mediated fusion activity.

It localises to the virion membrane. Its subcellular location is the host endoplasmic reticulum membrane. It is found in the host Golgi apparatus membrane. The protein resides in the host cell membrane. Its function is as follows. Functions as a cleaved signal peptide that is retained as the third component of the GP complex (GP-C). Helps to stabilize the spike complex in its native conformation. The SSP is required for efficient glycoprotein expression, post-translational maturation cleavage of G1 and G2, glycoprotein transport to the cell surface plasma membrane, formation of infectious virus particles, and acid pH-dependent glycoprotein-mediated cell fusion. Functionally, forms the virion spikes together with glycoprotein G2. The glycoprotein spike trimers are connected to the underlying matrix. Interacts with the host receptor leading to virus endocytosis. In terms of biological role, forms the virion spikes together with glycoprotein G1. The glycoprotein spike trimers are connected to the underlying matrix. Class I viral fusion protein that directs fusion of viral and host endosomal membranes, leading to delivery of the nucleocapsid into the cytoplasm. Membrane fusion is mediated by irreversible conformational changes induced by acidification. The chain is Pre-glycoprotein polyprotein GP complex from Mastomys natalensis (African soft-furred rat).